A 336-amino-acid chain; its full sequence is Protein-arginine N-acetylglucosaminyltransferase SseK1 (336 aa).

An N-beta-linked (GlcNAc) arginine; by autocatalysis glycan is attached at R24. UDP-N-acetyl-alpha-D-glucosamine contacts are provided by residues 50–52 (QWF) and Y74. The N-beta-linked (GlcNAc) arginine; by autocatalysis glycan is linked to R152. A DXD motif motif is present at residues 223–225 (DAD). Residue 224-225 (AD) participates in UDP-N-acetyl-alpha-D-glucosamine binding. D225 lines the Mn(2+) pocket. E255 serves as the catalytic Proton acceptor. Mn(2+)-binding residues include N322 and S324. UDP-N-acetyl-alpha-D-glucosamine is bound by residues S324 and S329. A glycan (N-beta-linked (GlcNAc) arginine; by autocatalysis) is linked at R333.

It belongs to the glycosyltransferase NleB family. Mn(2+) is required as a cofactor. In terms of processing, auto-glycosylated: arginine GlcNAcylation is required for activity toward death domain-containing host target proteins.

It localises to the secreted. The protein localises to the host cytoplasm. It is found in the host cytosol. It catalyses the reaction L-arginyl-[protein] + UDP-N-acetyl-alpha-D-glucosamine = N(omega)-(N-acetyl-beta-D-glucosaminyl)-L-arginyl-[protein] + UDP + H(+). With respect to regulation, protein-arginine N-acetylglucosaminyltransferase activity is inhibited by 100066N compound (flavone analog) and 102644N compound (a substituted isoxazole). In terms of biological role, protein-arginine N-acetylglucosaminyltransferase effector that disrupts TNF signaling in infected cells, including NF-kappa-B signaling, apoptosis and necroptosis. Acts by catalyzing the transfer of a single N-acetylglucosamine (GlcNAc) to a conserved arginine residue in the death domain of host proteins TRADD and, to a lower extent, FADD: arginine GlcNAcylation prevents homotypic/heterotypic death domain interactions and assembly of the oligomeric TNF-alpha receptor complex, thereby disrupting TNF signaling. Also acts on host proteins without a death domain: catalyzes arginine GlcNAcylation of host GAPDH protein, thereby preventing GAPDH interaction with TRAF2, leading to inhibit NF-kappa-B signaling. Catalyzes GlcNAcylation of host tubulin-folding cofactor TBCB, thereby promoting microtubule stability. Also mediates auto-GlcNAcylation, which is required for activity toward death domain-containing host target proteins. The polypeptide is Protein-arginine N-acetylglucosaminyltransferase SseK1 (Salmonella enteritidis (strain 2009K0958)).